A 175-amino-acid chain; its full sequence is Transcriptional regulator GadE (175 aa).

Residues 109-174 form the HTH luxR-type domain; the sequence is HKNSQLCFSH…DIVTLGITSY (66 aa). A DNA-binding region (H-T-H motif) is located at residues 133-152; it reads ESNITSTLNISQQTLKIQKF.

Regulates the expression of several genes involved in acid resistance. Required for the expression of gadA and gadBC, among others, regardless of media or growth conditions. Binds directly to the 20 bp GAD box found in the control regions of both loci. Could be involved in the regulation of the genes coding for the type III secretion system in enterohaemorragic strains. The protein is Transcriptional regulator GadE (gadE) of Escherichia coli O157:H7.